The chain runs to 365 residues: uncharacterized protein (365 aa).

Disordered stretches follow at residues 119–157, 216–298, and 313–365; these read ERSR…QQES, RPPG…DISH, and SHHH…LSVG. A compositionally biased stretch (basic and acidic residues) spans 326–340; sequence SDPRIESRDLPERPQ.

This is an uncharacterized protein from Homo sapiens (Human).